An 899-amino-acid chain; its full sequence is Valine--tRNA ligase (899 aa).

The 'HIGH' region motif lies at 58-68 (PNVTGVLHIGH). Residues 544–548 (KMSKS) carry the 'KMSKS' region motif. An ATP-binding site is contributed by lysine 547. The stretch at 836-898 (GTRLHNQRQK…NAELIALGLQ (63 aa)) forms a coiled coil.

It belongs to the class-I aminoacyl-tRNA synthetase family. ValS type 1 subfamily. Monomer.

The protein resides in the cytoplasm. It catalyses the reaction tRNA(Val) + L-valine + ATP = L-valyl-tRNA(Val) + AMP + diphosphate. In terms of biological role, catalyzes the attachment of valine to tRNA(Val). As ValRS can inadvertently accommodate and process structurally similar amino acids such as threonine, to avoid such errors, it has a 'posttransfer' editing activity that hydrolyzes mischarged Thr-tRNA(Val) in a tRNA-dependent manner. This Helicobacter hepaticus (strain ATCC 51449 / 3B1) protein is Valine--tRNA ligase.